Here is a 381-residue protein sequence, read N- to C-terminus: Cyclic AMP-AMP-GMP synthase (381 aa).

ATP contacts are provided by Gln51, Ser53, Arg56, Asp69, Asp71, and Arg109. Active-site residues include Asp69 and Asp71. 2 residues coordinate Mg(2+): Asp69 and Asp71. Asp121 is a catalytic residue. Mg(2+) contacts are provided by Asp121 and Asp196. Residues Asp196, Arg197, Arg204, Thr205, Gln210, Lys233, and Tyr250 each contribute to the ATP site. Residues Asn258 and Leu260 each contribute to the Mg(2+) site. Val304 and Arg307 together coordinate ATP. Residues 348 to 381 (GSKFPLPGPQGGDRNGGFTTPSKPAEPQKTGRFA) are disordered.

It belongs to the CD-NTase family. D02 subfamily. Monomer. Crystallizes as a Cap2 homodimer bound on each side by a CdnD monomer. Mg(2+) serves as cofactor. In bacteria expressing cap4-dncV-cap2-cap3, this protein is conjugated to a number of other proteins by Cap2, probably via this protein's C-terminal Ala residue. More conjugated DncV is found in the absence of Cap3.

It catalyses the reaction GTP + 2 ATP = 3',3',3'-cAAG + 3 diphosphate. With respect to regulation, primed for activation by Cap2 which conjugates it to cellular proteins; activation is target protein-specific (green fluorescent protein does not activate the enzyme), but which protein(s) activate it is unclear. Cyclic nucleotide synthase (second messenger synthase) of a CBASS antivirus system. CBASS (cyclic oligonucleotide-based antiphage signaling system) provides immunity against bacteriophages. The CD-NTase protein (CdnD, this protein) synthesizes cyclic nucleotides in response to infection; these serve as specific second messenger signals. The signals activate a diverse range of effectors, leading to bacterial cell death and thus abortive phage infection. A type II-C(AAG) CBASS system. Functionally, cyclic trinucleotide synthase that catalyzes the synthesis of 3',3',3'-cyclic AMP-AMP-GMP (cAAG) as the major product, a second messenger for cell signal transduction. Uses ATP as the first donor nucleotide, followed by GTP. In terms of biological role, protects E.coli against phage T2 infection. When the cdnD-cap2-cap3-cap4 operon is introduced in E.coli there is a more than 10(3) decrease in the efficiency of T2 plaque formation. The operon does not protect against phage T5 and only about 10-fold against T7. Expression of cdnD-cap4 alone protects E.coli against phage T2 infection. The sequence is that of Cyclic AMP-AMP-GMP synthase from Enterobacter hormaechei subsp. hoffmannii (strain UCI 50).